We begin with the raw amino-acid sequence, 1399 residues long: MKDLLNLLKNQGQIEEFDAIKIALASPEMIRSWSFGEVKKPETINYRTFKPERDGLFCAKIFGPVKDYECLCGKYKRLKHRGVICEKCGVEVALAKVRRERMAHIELASPVAHIWFLKSLPSRIGLLLDMTLRDIERVLYFESYVVIDPGMTTLEKGQLLNDEQYFEALEEFGDDFDARMGAEAVRELLIQIDLEHEIGRLREEIPQTNSETKIKKLSKRLKLMEAFHGSGNLPEWMILTVLPVLPPDLRPLVPLDGGRFATSDLNDLYRRVINRNNRLKRLLDLSAPDIIVRNEKRMLQEAVDALLDNGRRGRAITGSNKRPLKSLADMIKGKQGRFRQNLLGKRVDYSGRSVITVGPTLRLHQCGLPKKMALELFKPFIFGKLEMRGMATTIKAAKKMVERELPEVWDVLAEVIREHPVLLNRAPTLHRLGIQAFEPVLIEGKAIQLHPLVCAAYNADFDGDQMAVHVPLTLEAQLEARALMMSTNNILSPANGEPIIVPSQDVVLGLYYMTREAINAKGEGRVFADLQEVDRVFRAGEASLHARVKVRINETIKDRDGSITKNTRIVDTTVGRALLFQIVPEGMSFDVVNQPMKKKAISKLINLCYRTVGLKDTVIFADQLMYTGFAYSTISGVSIGVNDFVIPDEKARIIDAATEEVKEIESQYASGLVTQGEKYNKVIDLWSKANDEVSKAMMANLSKEKVIDREGNEAEQDSFNSMYMMADSGARGSAAQIRQLAGMRGLMAKPDGSIIETPITANFREGLNVLQYFISTHGARKGLADTALKTANSGYLTRRLVDVAQDLVVTEIDCGTEQGLHMTPHIEGGDVVEPLGERVLGRVIARDVLKPGTDDVLVPAGTLIDEQWVDFIELNSIDEVIVRSPISCETRYGICAKCYGRDLARGHQVNIGEAVGVIAAQSIGEPGTQLTMRTFHIGGAASRTSAVDNVLVKNGGTIRLHNLKHVERADGALVAVSRSGELAVADDFGRERERYKLPYGAVISVKEGDKVDAGAVVAKWDPHTHPIVTEMKGVVTFVGMEENITIKRQTDELTGLTNIEVMDPKDRPAAGKDIRPAIKMVDANGKELLLPGTDVPAQYFLPANALVGVADGAEINVGDVIARIPQETSKTRDITGGLPRVADLFEARRPKEPSILAEISGTISFGKETKGKRRLVITPTDGSDPYEELIPKWRHLNVFEGEQVNKGEVISDGPSNPHDILRLLGVSALARYIVNEIQDVYRLQGVKINDKHIETILRQMLRKVEITESGDSSFIKGDQMELTQVLEENERLSAEDKFVAKYVRVLLGITKASLSTESFISAASFQETTRVLTEAAVTGKRDYLRGLKENVVVGRLIPAGTGLAYHSERKRKRDAEKPVRVSADEVEAALTEALNSSGN.

Zn(2+)-binding residues include C70, C72, C85, and C88. Mg(2+)-binding residues include D460, D462, and D464. The Zn(2+) site is built by C814, C888, C895, and C898.

It belongs to the RNA polymerase beta' chain family. The RNAP catalytic core consists of 2 alpha, 1 beta, 1 beta' and 1 omega subunit. When a sigma factor is associated with the core the holoenzyme is formed, which can initiate transcription. Mg(2+) serves as cofactor. The cofactor is Zn(2+).

The enzyme catalyses RNA(n) + a ribonucleoside 5'-triphosphate = RNA(n+1) + diphosphate. DNA-dependent RNA polymerase catalyzes the transcription of DNA into RNA using the four ribonucleoside triphosphates as substrates. The sequence is that of DNA-directed RNA polymerase subunit beta' from Stutzerimonas stutzeri (strain A1501) (Pseudomonas stutzeri).